We begin with the raw amino-acid sequence, 163 residues long: Nucleotide-binding protein Asuc_2113 (163 aa).

The protein belongs to the YajQ family.

Its function is as follows. Nucleotide-binding protein. This chain is Nucleotide-binding protein Asuc_2113, found in Actinobacillus succinogenes (strain ATCC 55618 / DSM 22257 / CCUG 43843 / 130Z).